The chain runs to 848 residues: DNA mismatch repair protein MutS (848 aa).

ATP is bound at residue 605 to 612; it reads GPNMAGKS.

It belongs to the DNA mismatch repair MutS family.

In terms of biological role, this protein is involved in the repair of mismatches in DNA. It is possible that it carries out the mismatch recognition step. This protein has a weak ATPase activity. The chain is DNA mismatch repair protein MutS from Leptospira interrogans serogroup Icterohaemorrhagiae serovar Lai (strain 56601).